A 270-amino-acid polypeptide reads, in one-letter code: Gap junction beta-3 protein (270 aa).

Over 1–20 (MDWKKLQDLLSGVNQYSTAF) the chain is Cytoplasmic. A helical membrane pass occupies residues 21–40 (GRIWLSVVFVFRVLVYVVAA). Topologically, residues 41–75 (ERVWGDEQKDFDCNTRQPGCTNVCYDNFFPISNIR) are extracellular. The helical transmembrane segment at 76–98 (LWALQLIFVTCPSMLVILHVAYR) threads the bilayer. The Cytoplasmic segment spans residues 99 to 126 (EERERKHRQKHGEQCAKLYSHPGKKHGG). A helical transmembrane segment spans residues 127-149 (LWWTYLFSLIFKLIIELVFLYVL). The Extracellular segment spans residues 150–188 (HTLWHGFTMPRLVQCASIVPCPNTVDCYIARPTEKKVFT). Residues 189-211 (YFMVGASAVCIILTICEICYLIF) traverse the membrane as a helical segment. Residues 212–270 (HRIMRGISKGKSTKSISSPKSSSRASTCRCHHKLLESGDPEADPASEKLQASAPSLTPI) are Cytoplasmic-facing. A disordered region spans residues 246–270 (LESGDPEADPASEKLQASAPSLTPI).

This sequence belongs to the connexin family. Beta-type (group I) subfamily. A connexon is composed of a hexamer of connexins. Interacts with CNST.

The protein resides in the cell membrane. It is found in the cell junction. The protein localises to the gap junction. Its function is as follows. One gap junction consists of a cluster of closely packed pairs of transmembrane channels, the connexons, through which materials of low MW diffuse from one cell to a neighboring cell. This Mus musculus (Mouse) protein is Gap junction beta-3 protein (Gjb3).